Consider the following 185-residue polypeptide: Ribosome-recycling factor (185 aa).

It belongs to the RRF family.

It localises to the cytoplasm. Its function is as follows. Responsible for the release of ribosomes from messenger RNA at the termination of protein biosynthesis. May increase the efficiency of translation by recycling ribosomes from one round of translation to another. The sequence is that of Ribosome-recycling factor from Clostridium botulinum (strain Eklund 17B / Type B).